The sequence spans 662 residues: Methyl-accepting chemotaxis protein McpB (662 aa).

Over 1 to 16 the chain is Cytoplasmic; sequence MKTFINWLKKPSISKK. Residues 17–37 form a helical membrane-spanning segment; it reads LIVSFIAILIIPILILEFSSY. Residues 38 to 282 are Extracellular-facing; it reads RSASGKLDQE…IKDASKSVLT (245 aa). The region spanning 153 to 229 is the Cache domain; sequence VTDPYVAASD…KAGEKLSGDW (77 aa). Residues 283-303 form a helical membrane-spanning segment; it reads TGMIVLIASIVAGGILILFIV. The region spanning 304–356 is the HAMP domain; it reads RSITKPLKRLVQSSKTISRGDLTETIEIHSKDELGELGESFNEMGQSLRSLIS. The Cytoplasmic segment spans residues 304-662; sequence RSITKPLKRL…RDLTKQFKIE (359 aa). Q371 and Q595 each carry glutamate methyl ester (Gln). The Methyl-accepting transducer domain occupies 375-611; the sequence is SAGQTSKATE…HVSAAVSGIA (237 aa). E630 and E637 each carry glutamate methyl ester (Glu).

Belongs to the methyl-accepting chemotaxis (MCP) protein family. In terms of assembly, interacts with FloT. In terms of processing, some glutamine residues are deamidated to glutamate by CheD and subsequently methylated. Post-translationally, the demethylation is selective. Gln-371 is demethylated only upon asparagine addition whereas Glu-637 is demethylated only upon asparagine removal. Glu-630 appears indiscriminate and is demethylated upon both addition and removal of asparagine.

The protein localises to the cell membrane. It is found in the membrane raft. Chemotactic-signal transducers respond to changes in the concentration of attractants and repellents in the environment, transduce a signal from the outside to the inside of the cell, and facilitate sensory adaptation through the variation of the level of methylation. All amino acids serve as attractants in B.subtilis, they appear to cause an increase in the turnover methyl groups, leading to methylation of an unidentified acceptor, while repellents have been shown to cause a decrease in methyl group turnover. The methyl groups are added by a methyltransferase and removed by a methylesterase. McpB is required for taxis towards asparagine, aspartate, glutamine, and histidine. This chain is Methyl-accepting chemotaxis protein McpB (mcpB), found in Bacillus subtilis (strain 168).